The following is a 152-amino-acid chain: Acidic phospholipase A2 S17-58 (152 aa).

An N-terminal signal peptide occupies residues 1 to 19; that stretch reads MYPAHLLVLLAVCVSLLGA. The propeptide occupies 20–27; sequence SNIPLPSL. Disulfide bonds link Cys38–Cys104, Cys54–Cys151, Cys56–Cys72, Cys71–Cys132, Cys78–Cys125, Cys88–Cys118, and Cys111–Cys123. Residues Tyr55, Gly57, and Gly59 each contribute to the Ca(2+) site. His75 is a catalytic residue. Residue Asp76 coordinates Ca(2+). Asp126 is a catalytic residue.

It belongs to the phospholipase A2 family. Group I subfamily. D49 sub-subfamily. It depends on Ca(2+) as a cofactor. Expressed by the venom gland.

The protein localises to the secreted. The enzyme catalyses a 1,2-diacyl-sn-glycero-3-phosphocholine + H2O = a 1-acyl-sn-glycero-3-phosphocholine + a fatty acid + H(+). Functionally, snake venom phospholipase A2 (PLA2) that inhibits collagen-induced platelet aggregation. PLA2 catalyzes the calcium-dependent hydrolysis of the 2-acyl groups in 3-sn-phosphoglycerides. The chain is Acidic phospholipase A2 S17-58 from Austrelaps superbus (Lowland copperhead snake).